The following is an 86-amino-acid chain: Myosuppressin (86 aa).

The first 18 residues, 1-18, serve as a signal peptide directing secretion; it reads MAIFCNNVLAALPTQCNP. Positions 19-70 are excised as a propeptide; the sequence is GFLDDLPPRIRKVCVALSRIYELGSEMESYIGDKENHITGFHESIPLLDSGV. Gln-73 carries the post-translational modification Pyrrolidone carboxylic acid. Phenylalanine amide is present on Phe-82.

Its subcellular location is the secreted. Myoinhibiting neuropeptide. The polypeptide is Myosuppressin (Apis mellifera (Honeybee)).